We begin with the raw amino-acid sequence, 345 residues long: Calcium uniporter regulatory subunit MCUb, mitochondrial (345 aa).

Residues 1–44 (MPGALSGRRMLPSGLCLGRWQLLRTIRARGRGDPRELPSTPQVL) constitute a mitochondrion transit peptide. The stretch at 188–221 (EIQKRRERHLMAKIDHLQEQLRPLEQVKAAIEAR) forms a coiled coil. A run of 2 helical transmembrane segments spans residues 229–249 (LLWAGLALLSVQGGALAWLTW) and 259–279 (PVTFFLSFANSIVFFAYFIIT). The stretch at 306 to 334 (FDVEQYNKLKEDLAEATESLESVRRSLRL) forms a coiled coil.

It belongs to the MCU (TC 1.A.77) family. In terms of assembly, homooligomer. Associates with the uniplex complex, composed of MCU, MICU1, MICU2 and EMRE/SMDT1, inhibiting its activity. Detected in lung, brain and heart, and at lower levels in white fat, skeletal muscle and spleen. Detected at very low levels in kidney and liver. Highly expressed in macrophages during the progression of skeletal muscle regeneration.

The protein resides in the mitochondrion inner membrane. Functionally, negative regulator of the mitochondrial calcium uniporter (MCU), a channel that mediates calcium uptake into the mitochondrial matrix. MCUB is required to limit mitochondrial calcium overload during stress. Acts as a dominant-negative regulator that displaces MCU from the functional uniplex complex and thereby decreases the association of calcium sensors MICU1 and MICU2, preventing channel gating. Mitochondrial calcium homeostasis plays key roles in mitochondrial metabolism. Acts as an important regulator of mitochondrial metabolism in response to stress in muscle cells: induced in response to fasting, leading to restrict mitochondrial calcium uptake, resulting in reprogramming of mitochondria toward fatty acid oxidation preference. Acts as a regulator of macrophage polarization during skeletal muscle regeneration: inhibition of mitochondrial calcium uptake drives differentiation of macrophages with anti-inflammatory profile, promoting the differentiation and fusion of satellite cells. The sequence is that of Calcium uniporter regulatory subunit MCUb, mitochondrial from Mus musculus (Mouse).